Reading from the N-terminus, the 506-residue chain is Pisatin demethylase (506 aa).

Cys-453 contributes to the heme binding site.

The protein belongs to the cytochrome P450 family. Heme is required as a cofactor.

In terms of biological role, can detoxify the phytoalexin pisatin from garden pea. Pisatin is an antimicrobial compound produced by pea in response to infection by plant pathogens. This Fusarium vanettenii (Neocosmospora pisi) protein is Pisatin demethylase (PDA6-1).